The primary structure comprises 256 residues: 1-(5-phosphoribosyl)-5-[(5-phosphoribosylamino)methylideneamino] imidazole-4-carboxamide isomerase (256 aa).

The active-site Proton acceptor is the aspartate 8. Aspartate 129 functions as the Proton donor in the catalytic mechanism.

This sequence belongs to the HisA/HisF family.

It localises to the cytoplasm. The catalysed reaction is 1-(5-phospho-beta-D-ribosyl)-5-[(5-phospho-beta-D-ribosylamino)methylideneamino]imidazole-4-carboxamide = 5-[(5-phospho-1-deoxy-D-ribulos-1-ylimino)methylamino]-1-(5-phospho-beta-D-ribosyl)imidazole-4-carboxamide. It participates in amino-acid biosynthesis; L-histidine biosynthesis; L-histidine from 5-phospho-alpha-D-ribose 1-diphosphate: step 4/9. This chain is 1-(5-phosphoribosyl)-5-[(5-phosphoribosylamino)methylideneamino] imidazole-4-carboxamide isomerase, found in Prochlorococcus marinus (strain NATL1A).